Consider the following 519-residue polypeptide: Cytosol aminopeptidase (519 aa).

Ser42 is modified (phosphoserine). An N6-succinyllysine modification is found at Lys45. Residue Ser54 is modified to Phosphoserine. 2 positions are modified to N6-succinyllysine: Lys61 and Lys103. Phosphoserine occurs at positions 180 and 194. Residues Leu202, Met203, and Thr205 each contribute to the Zn(2+) site. The residue at position 221 (Lys221) is an N6-acetyllysine; alternate. Lys221 is modified (N6-succinyllysine; alternate). Ser238 bears the Phosphoserine mark. Positions 282 and 287 each coordinate Zn(2+). The substrate site is built by Lys282, Asp287, Ser292, and Lys294. Asp287 contacts Mg(2+). Residue Lys294 is part of the active site. Positions 303, 305, 364, and 366 each coordinate Zn(2+). Substrate contacts are provided by Asp305 and Asp364. Mg(2+) contacts are provided by Asp364 and Glu366. Arg368 is an active-site residue. N6-acetyllysine; alternate is present on Lys455. Lys455 carries the post-translational modification N6-succinyllysine; alternate. Residue Lys476 is modified to N6-succinyllysine. Residue Lys489 is modified to N6-acetyllysine; alternate. Position 489 is an N6-succinyllysine; alternate (Lys489).

Belongs to the peptidase M17 family. As to quaternary structure, homohexamer. Zn(2+) is required as a cofactor. Mn(2+) serves as cofactor.

Its subcellular location is the cytoplasm. The catalysed reaction is Release of an N-terminal amino acid, Xaa-|-Yaa-, in which Xaa is preferably Leu, but may be other amino acids including Pro although not Arg or Lys, and Yaa may be Pro. Amino acid amides and methyl esters are also readily hydrolyzed, but rates on arylamides are exceedingly low.. It carries out the reaction an S-substituted L-cysteinylglycine + H2O = an S-substituted L-cysteine + glycine. The enzyme catalyses L-cysteinylglycine + H2O = L-cysteine + glycine. It catalyses the reaction S-benzyl-L-cysteinylglycine + H2O = S-benzyl-L-cysteine + glycine. The catalysed reaction is Release of N-terminal proline from a peptide.. Cytosolic metallopeptidase that catalyzes the removal of unsubstituted N-terminal hydrophobic amino acids from various peptides. The presence of Zn(2+) ions is essential for the peptidase activity, and the association with other cofactors can modulate the substrate spectificity of the enzyme. For instance, in the presence of Mn(2+), it displays a specific Cys-Gly hydrolyzing activity of Cys-Gly-S-conjugates. Involved in the metabolism of glutathione and in the degradation of glutathione S-conjugates, which may play a role in the control of the cell redox status. This is Cytosol aminopeptidase from Sus scrofa (Pig).